We begin with the raw amino-acid sequence, 251 residues long: Glucosamine-6-phosphate deaminase (251 aa).

Catalysis depends on D67, which acts as the Proton acceptor; for enolization step. N136 acts as the For ring-opening step in catalysis. H138 functions as the Proton acceptor; for ring-opening step in the catalytic mechanism. E143 serves as the catalytic For ring-opening step.

It belongs to the glucosamine/galactosamine-6-phosphate isomerase family. NagB subfamily.

The catalysed reaction is alpha-D-glucosamine 6-phosphate + H2O = beta-D-fructose 6-phosphate + NH4(+). The protein operates within amino-sugar metabolism; N-acetylneuraminate degradation; D-fructose 6-phosphate from N-acetylneuraminate: step 5/5. Functionally, catalyzes the reversible isomerization-deamination of glucosamine 6-phosphate (GlcN6P) to form fructose 6-phosphate (Fru6P) and ammonium ion. The protein is Glucosamine-6-phosphate deaminase of Geobacillus sp. (strain WCH70).